A 382-amino-acid polypeptide reads, in one-letter code: MAEQRPLTIALVAGETSGDILGAGLIRALKARVPNARFVGVAGPRMQAEGCEAWYEMEELAVMGIVEVLGRLRRLLHIRADLTRRFTELQPDVFVGIDAPDFNITLEGNLKKQGIKTIHYVSPSVWAWRQKRVFKIGRSTNMVLAFLPFEKAFYDKFNVPCRFIGHTMADAMPLDPDKNAARDVLGISHDAHCLALLPGSRGAEVEMLSADFLKTAQLLRQTYPDLEVVVPLVNAKRREQFERIKAEVAPELSVHLLDGMGREAMVASDAALLASGTAALECMLAKCPMVVGYRMKPFTFWLAKRLVKTDYVSLPNLLAGRELVKELLQEECEPHALAEALLPLLANGKTSHAMHDTFRELHQQIRCNADEQAADAVLELAQ.

The protein belongs to the LpxB family.

It catalyses the reaction 2-N,3-O-bis[(3R)-3-hydroxytetradecanoyl]-alpha-D-glucosaminyl 1-phosphate + UDP-2-N,3-O-bis[(3R)-3-hydroxytetradecanoyl]-alpha-D-glucosamine = lipid A disaccharide (E. coli) + UDP + H(+). It carries out the reaction a lipid X + a UDP-2-N,3-O-bis[(3R)-3-hydroxyacyl]-alpha-D-glucosamine = a lipid A disaccharide + UDP + H(+). It functions in the pathway glycolipid biosynthesis; lipid IV(A) biosynthesis; lipid IV(A) from (3R)-3-hydroxytetradecanoyl-[acyl-carrier-protein] and UDP-N-acetyl-alpha-D-glucosamine: step 5/6. Functionally, condensation of UDP-2,3-diacylglucosamine and 2,3-diacylglucosamine-1-phosphate to form lipid A disaccharide, a precursor of lipid A, a phosphorylated glycolipid that anchors the lipopolysaccharide to the outer membrane of the cell. The chain is Lipid-A-disaccharide synthase from Citrobacter koseri (strain ATCC BAA-895 / CDC 4225-83 / SGSC4696).